A 256-amino-acid polypeptide reads, in one-letter code: Small ribosomal subunit protein bS18m (256 aa).

A disordered region spans residues 19-106 (GQRTAQFSTT…GGQRYGSNSQ (88 aa)). Residues 21 to 30 (RTAQFSTTSP) show a composition bias toward polar residues. The span at 44 to 66 (NAPRTNTNTSSPSSNNNNNAGSS) shows a compositional bias: low complexity.

The protein belongs to the bacterial ribosomal protein bS18 family. Component of the mitochondrial small ribosomal subunit (mt-SSU). Mature N.crassa 74S mitochondrial ribosomes consist of a small (37S) and a large (54S) subunit. The 37S small subunit contains a 16S ribosomal RNA (16S mt-rRNA) and 32 different proteins. The 54S large subunit contains a 23S rRNA (23S mt-rRNA) and 42 different proteins.

Its subcellular location is the mitochondrion. Functionally, component of the mitochondrial ribosome (mitoribosome), a dedicated translation machinery responsible for the synthesis of mitochondrial genome-encoded proteins, including at least some of the essential transmembrane subunits of the mitochondrial respiratory chain. The mitoribosomes are attached to the mitochondrial inner membrane and translation products are cotranslationally integrated into the membrane. This is Small ribosomal subunit protein bS18m (rsm18) from Neurospora crassa (strain ATCC 24698 / 74-OR23-1A / CBS 708.71 / DSM 1257 / FGSC 987).